Consider the following 139-residue polypeptide: MKIMATGVFDILHPGHIHYLSESKKLGDYLIVIIATDKTAGSHGKKLIFNEEQRRFMVSQLRMVDEAIIGHEDDIFKTVYEVRPDIITLGYDQHFNDSEIEKKCRDLGLNTRVVRISKYDGEIKSSSDIRRRIIELYNR.

ATP is bound by residues 8–9, 13–16, aspartate 92, and tyrosine 119; these read VF and HPGH.

This sequence belongs to the archaeal FAD synthase family. In terms of assembly, homodimer. Requires a divalent metal cation as cofactor.

The enzyme catalyses FMN + ATP + H(+) = FAD + diphosphate. The protein operates within cofactor biosynthesis; FAD biosynthesis; FAD from FMN: step 1/1. Its function is as follows. Catalyzes the transfer of the AMP portion of ATP to flavin mononucleotide (FMN) to produce flavin adenine dinucleotide (FAD) coenzyme. The protein is FAD synthase of Picrophilus torridus (strain ATCC 700027 / DSM 9790 / JCM 10055 / NBRC 100828 / KAW 2/3).